A 331-amino-acid chain; its full sequence is NADH-quinone oxidoreductase subunit H (331 aa).

The next 8 helical transmembrane spans lie at Ala7–Ile27, Met81–Val101, Ile114–Gly134, Ile154–Phe174, Val187–Val207, Phe238–Phe258, Trp271–Ile291, and Val310–Ala330.

Belongs to the complex I subunit 1 family. As to quaternary structure, NDH-1 is composed of 13 different subunits. Subunits NuoA, H, J, K, L, M, N constitute the membrane sector of the complex.

It is found in the cell inner membrane. The enzyme catalyses a quinone + NADH + 5 H(+)(in) = a quinol + NAD(+) + 4 H(+)(out). NDH-1 shuttles electrons from NADH, via FMN and iron-sulfur (Fe-S) centers, to quinones in the respiratory chain. The immediate electron acceptor for the enzyme in this species is believed to be ubiquinone. Couples the redox reaction to proton translocation (for every two electrons transferred, four hydrogen ions are translocated across the cytoplasmic membrane), and thus conserves the redox energy in a proton gradient. This subunit may bind ubiquinone. In Pseudomonas aeruginosa (strain ATCC 15692 / DSM 22644 / CIP 104116 / JCM 14847 / LMG 12228 / 1C / PRS 101 / PAO1), this protein is NADH-quinone oxidoreductase subunit H.